The primary structure comprises 157 residues: Endoribonuclease YbeY (157 aa).

The Zn(2+) site is built by His111, His115, and His121.

Belongs to the endoribonuclease YbeY family. It depends on Zn(2+) as a cofactor.

The protein localises to the cytoplasm. In terms of biological role, single strand-specific metallo-endoribonuclease involved in late-stage 70S ribosome quality control and in maturation of the 3' terminus of the 16S rRNA. The protein is Endoribonuclease YbeY of Pseudomonas putida (strain ATCC 47054 / DSM 6125 / CFBP 8728 / NCIMB 11950 / KT2440).